We begin with the raw amino-acid sequence, 392 residues long: 23S rRNA (uracil(747)-C(5))-methyltransferase RlmC (392 aa).

4 residues coordinate [4Fe-4S] cluster: C4, C12, C15, and C93. Residues Q218, F247, E275, and N321 each contribute to the S-adenosyl-L-methionine site. C348 acts as the Nucleophile in catalysis.

It belongs to the class I-like SAM-binding methyltransferase superfamily. RNA M5U methyltransferase family. RlmC subfamily.

The enzyme catalyses uridine(747) in 23S rRNA + S-adenosyl-L-methionine = 5-methyluridine(747) in 23S rRNA + S-adenosyl-L-homocysteine + H(+). In terms of biological role, catalyzes the formation of 5-methyl-uridine at position 747 (m5U747) in 23S rRNA. This Haemophilus influenzae (strain ATCC 51907 / DSM 11121 / KW20 / Rd) protein is 23S rRNA (uracil(747)-C(5))-methyltransferase RlmC.